Here is a 192-residue protein sequence, read N- to C-terminus: Inosine triphosphate pyrophosphatase (192 aa).

8–13 is an ITP binding site; that stretch reads TTNLKK. A Mg(2+)-binding site is contributed by E34. ITP is bound by residues K46, 64–65, K81, 141–144, K164, and 169–170; these read DT, EGFD, and HR.

It belongs to the HAM1 NTPase family. Homodimer. Requires Mg(2+) as cofactor. Mn(2+) serves as cofactor.

The protein localises to the cytoplasm. The protein resides in the nucleus. The enzyme catalyses ITP + H2O = IMP + diphosphate + H(+). It carries out the reaction dITP + H2O = dIMP + diphosphate + H(+). It catalyses the reaction XTP + H2O = XMP + diphosphate + H(+). Its function is as follows. Pyrophosphatase that hydrolyzes non-canonical purine nucleotides such as inosine triphosphate (ITP), deoxyinosine triphosphate (dITP) or xanthosine 5'-triphosphate (XTP) to their respective monophosphate derivatives. The enzyme does not distinguish between the deoxy- and ribose forms. Probably excludes non-canonical purines from RNA and DNA precursor pools, thus preventing their incorporation into RNA and DNA and avoiding chromosomal lesions. In Encephalitozoon cuniculi (strain GB-M1) (Microsporidian parasite), this protein is Inosine triphosphate pyrophosphatase.